Reading from the N-terminus, the 841-residue chain is Protein translocase subunit SecA (841 aa).

ATP is bound by residues glutamine 85, 103 to 107 (GEGKT), and aspartate 492. Positions 790 to 814 (IQGQTTAHQPKEGDEEKQAKKKPVR) are disordered. The span at 798–807 (QPKEGDEEKQ) shows a compositional bias: basic and acidic residues. Zn(2+) contacts are provided by cysteine 825, cysteine 827, cysteine 836, and cysteine 837.

This sequence belongs to the SecA family. Monomer and homodimer. Part of the essential Sec protein translocation apparatus which comprises SecA, SecYEG and auxiliary proteins SecDF. Other proteins may also be involved. Zn(2+) serves as cofactor.

Its subcellular location is the cell membrane. It is found in the cytoplasm. The catalysed reaction is ATP + H2O + cellular proteinSide 1 = ADP + phosphate + cellular proteinSide 2.. Its function is as follows. Part of the Sec protein translocase complex. Interacts with the SecYEG preprotein conducting channel. Has a central role in coupling the hydrolysis of ATP to the transfer of proteins into and across the cell membrane, serving as an ATP-driven molecular motor driving the stepwise translocation of polypeptide chains across the membrane. This chain is Protein translocase subunit SecA, found in Bacillus licheniformis (strain ATCC 14580 / DSM 13 / JCM 2505 / CCUG 7422 / NBRC 12200 / NCIMB 9375 / NCTC 10341 / NRRL NRS-1264 / Gibson 46).